The following is a 2223-amino-acid chain: Protein CHROMATIN REMODELING 4 (2223 aa).

The segment at 39-69 (FDSPEYTSSSKPSKQRLKTDSTPERNSSKRK) is disordered. Positions 55–69 (LKTDSTPERNSSKRK) are enriched in basic and acidic residues. The PHD-type zinc finger occupies 75 to 122 (YFECVICDLGGDLLCCDSCPRTYHTACLNPPLKRIPNGKWICPKCSPN). Composition is skewed to basic and acidic residues over residues 173-187 (EKGK…KSTG), 207-223 (SADD…DDLG), 248-285 (ESKL…ETGK), and 294-305 (ELNDGESLERCK). Disordered regions lie at residues 173 to 235 (EKGK…LPSD), 248 to 381 (ESKL…CLED), and 441 to 474 (AEDR…GTEG). Residues 306–315 (TDKKRAKKSL) show a composition bias toward basic residues. Positions 353–368 (ETPEKVKKLPKEERRA) are enriched in basic and acidic residues. Over residues 372-381 (TNKSSSCLED) the composition is skewed to polar residues. Positions 441–466 (AEDRIDSSSETGKSSRDSRLRDKDMD) are enriched in basic and acidic residues. Chromo domains are found at residues 531–587 (EEIE…YKAK) and 601–663 (KQPQ…ERNS). The 178-residue stretch at 701 to 878 (RRCWHKSKNV…YNLLNFLQPS (178 aa)) folds into the Helicase ATP-binding domain. Position 714–721 (714–721 (DEMGLGKT)) interacts with ATP. The DEAH box motif lies at 829-832 (DEGH). Positions 902 to 909 (LKKLVAPH) match the Nuclear localization signal motif. One can recognise a Helicase C-terminal domain in the interval 1008-1167 (LLHSMLKVLH…GSQKEFEDIL (160 aa)). 6 disordered regions span residues 1268 to 1300 (EETA…DDVV), 1341 to 1380 (EAYA…LKEK), 1394 to 1463 (RRNS…ECLP), 1483 to 1511 (SESS…FNLP), 1760 to 1779 (LSSL…SSLF), and 2006 to 2223 (IPPF…LSDD). A compositionally biased stretch (basic and acidic residues) spans 1363–1380 (EPELKKEYTPAGRALKEK). A coiled-coil region spans residues 1375-1402 (RALKEKFTKLRERQKNLIARRNSVEESL). The segment covering 1403–1414 (PSGNVDQVTEVA) has biased composition (polar residues). Residues 2009-2019 (FVIPEPPPPAP) show a composition bias toward pro residues. The span at 2025–2035 (SLRKKRKRKLH) shows a compositional bias: basic residues. Polar residues-rich tracts occupy residues 2039–2061 (QKTT…GNPQ), 2075–2096 (GETS…TEPL), and 2128–2148 (TGTT…TINQ). Over residues 2157 to 2171 (DEKVESERTPLHSDE) the composition is skewed to basic and acidic residues. Residues 2189-2215 (IEAESQNTNAEEEAEAQEEDEESMKMV) adopt a coiled-coil conformation. The span at 2198–2210 (AEEEAEAQEEDEE) shows a compositional bias: acidic residues.

It belongs to the SNF2/RAD54 helicase family.

The protein localises to the nucleus. In terms of biological role, chromatin-remodeling protein that binds DNA through histones and regulates gene transcription. May specifically recognize and bind trimethylated 'Lys-27' (H3K27me3) and non-methylated 'Lys-4' of histone H3. Probable chromatin remodeling factor. The protein is Protein CHROMATIN REMODELING 4 of Arabidopsis thaliana (Mouse-ear cress).